Reading from the N-terminus, the 731-residue chain is 1,4-alpha-glucan branching enzyme GlgB (731 aa).

Asp411 functions as the Nucleophile in the catalytic mechanism. Catalysis depends on Glu464, which acts as the Proton donor.

Belongs to the glycosyl hydrolase 13 family. GlgB subfamily. Monomer.

The catalysed reaction is Transfers a segment of a (1-&gt;4)-alpha-D-glucan chain to a primary hydroxy group in a similar glucan chain.. The protein operates within glycan biosynthesis; glycogen biosynthesis. In terms of biological role, catalyzes the formation of the alpha-1,6-glucosidic linkages in glycogen by scission of a 1,4-alpha-linked oligosaccharide from growing alpha-1,4-glucan chains and the subsequent attachment of the oligosaccharide to the alpha-1,6 position. The protein is 1,4-alpha-glucan branching enzyme GlgB of Mycobacterium bovis (strain ATCC BAA-935 / AF2122/97).